Reading from the N-terminus, the 259-residue chain is TCF3 fusion partner homolog (259 aa).

Disordered stretches follow at residues 51 to 72 (GLGD…GRRR) and 141 to 210 (EDDG…APVQ). At Ser167 the chain carries Phosphoserine. The residue at position 172 (Thr172) is a Phosphothreonine. A phosphoserine mark is found at Ser180 and Ser188. Position 203 is a phosphothreonine (Thr203). A Glycyl lysine isopeptide (Lys-Gly) (interchain with G-Cter in SUMO2) cross-link involves residue Lys222. Residues 240–259 (VSRGPDKLLPYPTLASPPFD) form a disordered region. Ser255 carries the phosphoserine modification.

In terms of assembly, interacts with NOL3; translocates NOL3 into the nucleus and negatively regulated TFPT-induced cell death. Component of the chromatin remodeling INO80 complex; specifically part of a complex module associated with the N-terminus of INO80. In terms of tissue distribution, ubiquitously expressed. Abundant in the brain.

It is found in the nucleus. Appears to promote apoptosis in a p53/TP53-independent manner. In terms of biological role, putative regulatory component of the chromatin remodeling INO80 complex which is involved in transcriptional regulation, DNA replication and probably DNA repair. The protein is TCF3 fusion partner homolog (Tfpt) of Rattus norvegicus (Rat).